The chain runs to 199 residues: MGLEIKGVTIPALMIKLDKSRSFEENLEELEKKLSSAFFQGSVSVVDLSDMELSEDQKEKIESILKKYNSKVLGYRTSDKRSEKRSISNVSEKKSLKIINKTLRSGQRVEYDGDILIIGDVNPDAYVIASGNIIVMGTLRGIVHAGANGDETAVIMALKLKPQQLRIASYLTRSPDEMEEPEYPEKAYIEDNQIYIDKI.

This sequence belongs to the MinC family. In terms of assembly, interacts with MinD and FtsZ.

Its function is as follows. Cell division inhibitor that blocks the formation of polar Z ring septums. Rapidly oscillates between the poles of the cell to destabilize FtsZ filaments that have formed before they mature into polar Z rings. Prevents FtsZ polymerization. The polypeptide is Probable septum site-determining protein MinC (Persephonella marina (strain DSM 14350 / EX-H1)).